A 239-amino-acid chain; its full sequence is Urease accessory protein UreE (239 aa).

The segment at 185–239 (VASPLDEPHGSGLHIHGIHSHGDGHSHSHDSHSHSHDSDHGHSHSHGDHDHDHKH) is disordered. Basic and acidic residues predominate over residues 204-239 (SHGDGHSHSHDSHSHSHDSDHGHSHSHGDHDHDHKH).

It belongs to the UreE family.

The protein localises to the cytoplasm. Functionally, involved in urease metallocenter assembly. Binds nickel. Probably functions as a nickel donor during metallocenter assembly. The polypeptide is Urease accessory protein UreE (Yersinia frederiksenii).